Reading from the N-terminus, the 64-residue chain is Prokaryotic ubiquitin-like protein Pup (64 aa).

Residues 1–37 are disordered; the sequence is MAQEQTKRGGGGGEDDDLSGGAGAGQERREKLAEETD. Residues 21 to 58 are ARC ATPase binding; sequence GAGAGQERREKLAEETDDLLDEIDDVLEENAEDFVRAY. Positions 24–52 form a coiled coil; it reads AGQERREKLAEETDDLLDEIDDVLEENAE. Position 64 is a deamidated glutamine (glutamine 64). Residue glutamine 64 forms an Isoglutamyl lysine isopeptide (Gln-Lys) (interchain with K-? in acceptor proteins) linkage.

This sequence belongs to the prokaryotic ubiquitin-like protein family. As to quaternary structure, strongly interacts with the proteasome-associated ATPase ARC through a hydrophobic interface; the interacting region of Pup lies in its C-terminal half. There is one Pup binding site per ARC hexamer ring. Post-translationally, is modified by deamidation of its C-terminal glutamine to glutamate by the deamidase Dop, a prerequisite to the subsequent pupylation process.

It functions in the pathway protein degradation; proteasomal Pup-dependent pathway. Its function is as follows. Protein modifier that is covalently attached to lysine residues of substrate proteins, thereby targeting them for proteasomal degradation. The tagging system is termed pupylation. The polypeptide is Prokaryotic ubiquitin-like protein Pup (Mycobacterium sp. (strain JLS)).